We begin with the raw amino-acid sequence, 644 residues long: Chaperone protein HtpG (644 aa).

An a; substrate-binding region spans residues 1–352 (MNARVEQLEF…AQDMSLNVSR (352 aa)). The tract at residues 353 to 566 (EILQQDRQIK…AFGITPALAR (214 aa)) is b. The segment at 567–644 (LYRASGQDIP…ILADRLARTL (78 aa)) is c.

Belongs to the heat shock protein 90 family. As to quaternary structure, homodimer.

The protein resides in the cytoplasm. Functionally, molecular chaperone. Has ATPase activity. The polypeptide is Chaperone protein HtpG (Mycolicibacterium paratuberculosis (strain ATCC BAA-968 / K-10) (Mycobacterium paratuberculosis)).